We begin with the raw amino-acid sequence, 316 residues long: tRNA uridine(34) hydroxylase (316 aa).

Residues 123 to 217 form the Rhodanese domain; sequence LSDDTVVIDA…YGKDPETKGE (95 aa). The active-site Cysteine persulfide intermediate is the C177.

This sequence belongs to the TrhO family.

The enzyme catalyses uridine(34) in tRNA + AH2 + O2 = 5-hydroxyuridine(34) in tRNA + A + H2O. Functionally, catalyzes oxygen-dependent 5-hydroxyuridine (ho5U) modification at position 34 in tRNAs. This chain is tRNA uridine(34) hydroxylase, found in Staphylococcus saprophyticus subsp. saprophyticus (strain ATCC 15305 / DSM 20229 / NCIMB 8711 / NCTC 7292 / S-41).